A 794-amino-acid chain; its full sequence is uncharacterized protein (794 aa).

Transmembrane regions (helical) follow at residues 34–54, 67–87, 99–119, 132–152, 257–277, 283–303, 315–335, 353–373, and 421–441; these read FSAS…VFAV, ITAA…AHLI, MLAD…AFAS, LFLF…ADVT, VGPS…AMGL, LAWI…MFQL, WSVN…VLVF, LGAL…ATLF, and WTGT…LMGV.

The protein resides in the cell membrane. This is an uncharacterized protein from Corynebacterium glutamicum (strain ATCC 13032 / DSM 20300 / JCM 1318 / BCRC 11384 / CCUG 27702 / LMG 3730 / NBRC 12168 / NCIMB 10025 / NRRL B-2784 / 534).